Reading from the N-terminus, the 149-residue chain is Transcriptional regulator MraZ (149 aa).

2 consecutive SpoVT-AbrB domains span residues 7-54 (KYVN…GISH) and 83-126 (AVQL…QPQN).

Belongs to the MraZ family. In terms of assembly, forms oligomers.

It localises to the cytoplasm. The protein resides in the nucleoid. This chain is Transcriptional regulator MraZ, found in Rickettsia rickettsii (strain Sheila Smith).